A 475-amino-acid chain; its full sequence is Ribulose bisphosphate carboxylase large chain (475 aa).

Substrate-binding residues include N123 and T173. The active-site Proton acceptor is the K175. K177 contacts substrate. Residues K201, D203, and E204 each coordinate Mg(2+). K201 is modified (N6-carboxylysine). H294 functions as the Proton acceptor in the catalytic mechanism. Residues R295, H327, and S379 each contribute to the substrate site.

This sequence belongs to the RuBisCO large chain family. Type I subfamily. As to quaternary structure, heterohexadecamer of 8 large chains and 8 small chains. The cofactor is Mg(2+).

The protein resides in the plastid. It is found in the chloroplast. The enzyme catalyses 2 (2R)-3-phosphoglycerate + 2 H(+) = D-ribulose 1,5-bisphosphate + CO2 + H2O. The catalysed reaction is D-ribulose 1,5-bisphosphate + O2 = 2-phosphoglycolate + (2R)-3-phosphoglycerate + 2 H(+). Its function is as follows. RuBisCO catalyzes two reactions: the carboxylation of D-ribulose 1,5-bisphosphate, the primary event in carbon dioxide fixation, as well as the oxidative fragmentation of the pentose substrate in the photorespiration process. Both reactions occur simultaneously and in competition at the same active site. This Bigelowiella natans (Pedinomonas minutissima) protein is Ribulose bisphosphate carboxylase large chain.